Here is a 190-residue protein sequence, read N- to C-terminus: MEPSHSNTGQSRSVDRKTVEKNRRMQMKSLYSELISLLPHHSSTEPLTLPDQLDEAANYIKKLQVNVEKKRERKRNLVATTTLEKLNSVGSSSVSSSVDVSVPRKLPKIEIQETGSIFHIFLVTSLEHKFMFCEIIRVLTEELGAEITHAGYSIVDDAVFHTLHCKVEEHDYGARSQIPERLEKIVNSVH.

Positions 1–12 (MEPSHSNTGQSR) are enriched in polar residues. Positions 1–21 (MEPSHSNTGQSRSVDRKTVEK) are disordered. The bHLH domain maps to 11–63 (SRSVDRKTVEKNRRMQMKSLYSELISLLPHHSSTEPLTLPDQLDEAANYIKKL).

Belongs to the bHLH protein family.

Its subcellular location is the nucleus. The protein is Transcription factor bHLH162 of Arabidopsis thaliana (Mouse-ear cress).